A 138-amino-acid polypeptide reads, in one-letter code: MLMPKRTKFRKQQKGQFAGLSKGATFVDFGEFGMQTLERGWVTSRQIEACRVAINRYLKRKGKVWIRVFPDKSVTKKPAETRMGKGKGAPDHWVAVVRPGRILFEVANVSREDAQDALRRAAAKLGIRTRFVKRVERV.

It belongs to the universal ribosomal protein uL16 family. As to quaternary structure, part of the 50S ribosomal subunit.

Its function is as follows. Binds 23S rRNA and is also seen to make contacts with the A and possibly P site tRNAs. In Chlamydia caviae (strain ATCC VR-813 / DSM 19441 / 03DC25 / GPIC) (Chlamydophila caviae), this protein is Large ribosomal subunit protein uL16.